The primary structure comprises 86 residues: uncharacterized protein (86 aa).

A helical membrane pass occupies residues 4–24 (LFFTLIAFVAIILLMSIGFII).

Its subcellular location is the membrane. This is an uncharacterized protein from Haemophilus influenzae (strain ATCC 51907 / DSM 11121 / KW20 / Rd).